Reading from the N-terminus, the 398-residue chain is Acetate kinase 1 (398 aa).

N9 provides a ligand contact to Mg(2+). K16 serves as a coordination point for ATP. R89 contacts substrate. D146 (proton donor/acceptor) is an active-site residue. ATP-binding positions include 206-210 (HLGNG), 281-283 (DCR), and 329-333 (GIGEN). E384 contributes to the Mg(2+) binding site.

This sequence belongs to the acetokinase family. In terms of assembly, homodimer. Mg(2+) serves as cofactor. It depends on Mn(2+) as a cofactor.

It localises to the cytoplasm. The catalysed reaction is acetate + ATP = acetyl phosphate + ADP. It functions in the pathway metabolic intermediate biosynthesis; acetyl-CoA biosynthesis; acetyl-CoA from acetate: step 1/2. Functionally, catalyzes the formation of acetyl phosphate from acetate and ATP. Can also catalyze the reverse reaction. This is Acetate kinase 1 from Vibrio cholerae serotype O1 (strain ATCC 39315 / El Tor Inaba N16961).